The chain runs to 602 residues: NAD-dependent protein deacetylase sir-2.1 (602 aa).

The tract at residues 25-57 is disordered; the sequence is PEIETMHIENSVEGESGRQRTESTASVNSESWQ. Residues 46–57 are compositionally biased toward polar residues; the sequence is ESTASVNSESWQ. The region spanning 119-374 is the Deacetylase sirtuin-type domain; it reads KLFTYNSLSD…RDICYALGGS (256 aa). Residues 144–163 and 228–231 contribute to the NAD(+) site; these read GAGV…DGIY and QNID. The active-site Proton acceptor is H246. The Zn(2+) site is built by C254, C257, C278, and C281. Residues 318–320, 343–345, and C360 each bind NAD(+); these read GSS and NRE. 2 disordered regions span residues 411 to 468 and 520 to 551; these read QERR…SDEV and RNRH…RSQS.

It belongs to the sirtuin family. Class I subfamily. In terms of assembly, interacts with ftt-2 and par-5. Interacts with daf-16 following heat-shock, which causes daf-16 to accumulate in the nucleus. Interaction with daf-16 is promoted by ftt-2. Requires Zn(2+) as cofactor.

It is found in the nucleus. It carries out the reaction N(6)-acetyl-L-lysyl-[protein] + NAD(+) + H2O = 2''-O-acetyl-ADP-D-ribose + nicotinamide + L-lysyl-[protein]. Functionally, NAD-dependent deacetylase. Required for a reduction of the 'Lys-16' acetylation of histone H4 (H4K16ac) on dosage-compensated X chromosomes in hermaphrodites. Functions upstream of daf-16 in the insulin-like signaling pathway, promoting daf-16 mediated transcriptional activation and increased life-span. May also regulate life-span independently of daf-16 by modulating the transcription of genes involved in the stress response of the endoplasmic reticulum (ER). Acts upstream of the nicotinic acid metabolism pathway, which may be linked to the regulation of longevity. Plays a role in ascaroside-mediated longevity and stress resistance. The polypeptide is NAD-dependent protein deacetylase sir-2.1 (sir-2.1) (Caenorhabditis briggsae).